Here is a 393-residue protein sequence, read N- to C-terminus: 26S proteasome regulatory subunit 10B (393 aa).

178–185 (GPPGTGKT) is an ATP binding site.

It belongs to the AAA ATPase family.

It is found in the cytoplasm. The protein localises to the nucleus. In terms of biological role, the 26S proteasome is involved in the ATP-dependent degradation of ubiquitinated proteins. The regulatory (or ATPase) complex confers ATP dependency and substrate specificity to the 26S complex. The sequence is that of 26S proteasome regulatory subunit 10B (psmC6) from Dictyostelium discoideum (Social amoeba).